The sequence spans 164 residues: Lipoprotein signal peptidase (164 aa).

4 helical membrane passes run 11–31, 41–61, 64–84, and 92–112; these read YWVL…AVLS, VIPS…FSFL, QGGW…AYLV, and FAAL…GNVI. Catalysis depends on residues Asp-122 and Asp-140. Residues 132–152 traverse the membrane as a helical segment; that stretch reads FYPAFNIADSFICVGAVLAVL.

Belongs to the peptidase A8 family.

The protein resides in the cell inner membrane. It catalyses the reaction Release of signal peptides from bacterial membrane prolipoproteins. Hydrolyzes -Xaa-Yaa-Zaa-|-(S,diacylglyceryl)Cys-, in which Xaa is hydrophobic (preferably Leu), and Yaa (Ala or Ser) and Zaa (Gly or Ala) have small, neutral side chains.. It participates in protein modification; lipoprotein biosynthesis (signal peptide cleavage). Its function is as follows. This protein specifically catalyzes the removal of signal peptides from prolipoproteins. This Neisseria gonorrhoeae (strain ATCC 700825 / FA 1090) protein is Lipoprotein signal peptidase.